Consider the following 156-residue polypeptide: 6,7-dimethyl-8-ribityllumazine synthase (156 aa).

5-amino-6-(D-ribitylamino)uracil-binding positions include phenylalanine 22, 56–58 (AME), and 80–82 (AVI). 85–86 (ET) contributes to the (2S)-2-hydroxy-3-oxobutyl phosphate binding site. Residue histidine 88 is the Proton donor of the active site. Residue phenylalanine 113 participates in 5-amino-6-(D-ribitylamino)uracil binding. Position 127 (arginine 127) interacts with (2S)-2-hydroxy-3-oxobutyl phosphate.

The protein belongs to the DMRL synthase family.

The enzyme catalyses (2S)-2-hydroxy-3-oxobutyl phosphate + 5-amino-6-(D-ribitylamino)uracil = 6,7-dimethyl-8-(1-D-ribityl)lumazine + phosphate + 2 H2O + H(+). It functions in the pathway cofactor biosynthesis; riboflavin biosynthesis; riboflavin from 2-hydroxy-3-oxobutyl phosphate and 5-amino-6-(D-ribitylamino)uracil: step 1/2. Catalyzes the formation of 6,7-dimethyl-8-ribityllumazine by condensation of 5-amino-6-(D-ribitylamino)uracil with 3,4-dihydroxy-2-butanone 4-phosphate. This is the penultimate step in the biosynthesis of riboflavin. In Kosmotoga olearia (strain ATCC BAA-1733 / DSM 21960 / TBF 19.5.1), this protein is 6,7-dimethyl-8-ribityllumazine synthase.